The following is a 297-amino-acid chain: MLKIGSHVSMSGKHMLLAASQEASSYGANTFMIYTGAPQNTRRKKIEDLNIEAGRAHMEENGISDIVVHAPYIINIANTTNPATFELGVEFLRSEIERTSAIGARQIVLHPGAHVGAGAETGIQKIIEGLNEVIDPNQNVQIALETMAGKGSECGRTFEELAQIIDGVTHNEHLSVCFDTCHTHDAGYDVVSDFDGVLNEFDKIVGIDRLKVLHINDSKNVRGARKDRHENIGFGEIGFDALQYIVHHDQLKDIPKILETPYVGEDKKNKKPPYRFEIEMLKNKQFDEELLEKIKQQ.

Residues His-69, His-110, Glu-145, Asp-179, His-182, His-214, Asp-227, His-229, and Glu-259 each coordinate Zn(2+).

Belongs to the AP endonuclease 2 family. It depends on Zn(2+) as a cofactor.

The enzyme catalyses Endonucleolytic cleavage to 5'-phosphooligonucleotide end-products.. Functionally, endonuclease IV plays a role in DNA repair. It cleaves phosphodiester bonds at apurinic or apyrimidinic (AP) sites, generating a 3'-hydroxyl group and a 5'-terminal sugar phosphate. In Bacillus licheniformis (strain ATCC 14580 / DSM 13 / JCM 2505 / CCUG 7422 / NBRC 12200 / NCIMB 9375 / NCTC 10341 / NRRL NRS-1264 / Gibson 46), this protein is Probable endonuclease 4.